Consider the following 242-residue polypeptide: MTTVSMRDMLQAGVHFGHQTRYWNPKMKPFIFGARNGVHIINLEHTVPMFNEALAFISNVASKKGKVLFVGTKRAASEAIKEAAVSCDQYYVDHRWLGGMLTNWKTVRQSIKRLKDLESQSVDGTFDKLTKKEALMRTRELDKLEKSLGGIKNMAGLPDVIFVIGADHEHIAIKEANNLGIPVVAVVDTNSSPDGINYIIPGNDDAMRSIRLYTQSVAAAAKAGRGQDLAVQAEQDGFVEAE.

The protein belongs to the universal ribosomal protein uS2 family.

This Shewanella pealeana (strain ATCC 700345 / ANG-SQ1) protein is Small ribosomal subunit protein uS2.